The sequence spans 283 residues: Thymidylate synthase (283 aa).

Residue arginine 22 coordinates dUMP. The Nucleophile role is filled by cysteine 160. DUMP contacts are provided by residues 180 to 183, asparagine 191, and 221 to 223; these read RSCD and HIY. Aspartate 183 lines the (6R)-5,10-methylene-5,6,7,8-tetrahydrofolate pocket. (6R)-5,10-methylene-5,6,7,8-tetrahydrofolate is bound at residue serine 282.

This sequence belongs to the thymidylate synthase family. Bacterial-type ThyA subfamily. As to quaternary structure, homodimer.

It localises to the cytoplasm. The enzyme catalyses dUMP + (6R)-5,10-methylene-5,6,7,8-tetrahydrofolate = 7,8-dihydrofolate + dTMP. It participates in pyrimidine metabolism; dTTP biosynthesis. Functionally, catalyzes the reductive methylation of 2'-deoxyuridine-5'-monophosphate (dUMP) to 2'-deoxythymidine-5'-monophosphate (dTMP) while utilizing 5,10-methylenetetrahydrofolate (mTHF) as the methyl donor and reductant in the reaction, yielding dihydrofolate (DHF) as a by-product. This enzymatic reaction provides an intracellular de novo source of dTMP, an essential precursor for DNA biosynthesis. This chain is Thymidylate synthase, found in Vibrio cholerae serotype O1 (strain ATCC 39315 / El Tor Inaba N16961).